Consider the following 785-residue polypeptide: Endonuclease MutS2 (785 aa).

ATP is bound at residue 335–342 (GPNTGGKT). The Smr domain maps to 710–785 (LDLRGERYED…GNGVTIVEFK (76 aa)).

Belongs to the DNA mismatch repair MutS family. MutS2 subfamily. Homodimer. Binds to stalled ribosomes, contacting rRNA.

Its function is as follows. Endonuclease that is involved in the suppression of homologous recombination and thus may have a key role in the control of bacterial genetic diversity. Acts as a ribosome collision sensor, splitting the ribosome into its 2 subunits. Detects stalled/collided 70S ribosomes which it binds and splits by an ATP-hydrolysis driven conformational change. Acts upstream of the ribosome quality control system (RQC), a ribosome-associated complex that mediates the extraction of incompletely synthesized nascent chains from stalled ribosomes and their subsequent degradation. Probably generates substrates for RQC. The polypeptide is Endonuclease MutS2 (Listeria innocua serovar 6a (strain ATCC BAA-680 / CLIP 11262)).